Here is a 450-residue protein sequence, read N- to C-terminus: Phosphoglucosamine mutase (450 aa).

The active-site Phosphoserine intermediate is the Ser102. 4 residues coordinate Mg(2+): Ser102, Asp243, Asp245, and Asp247. Ser102 is subject to Phosphoserine.

The protein belongs to the phosphohexose mutase family. The cofactor is Mg(2+). Post-translationally, activated by phosphorylation.

The catalysed reaction is alpha-D-glucosamine 1-phosphate = D-glucosamine 6-phosphate. Functionally, catalyzes the conversion of glucosamine-6-phosphate to glucosamine-1-phosphate. In Rhizobium etli (strain ATCC 51251 / DSM 11541 / JCM 21823 / NBRC 15573 / CFN 42), this protein is Phosphoglucosamine mutase.